The primary structure comprises 116 residues: Large ribosomal subunit protein bL19 (116 aa).

This sequence belongs to the bacterial ribosomal protein bL19 family.

Its function is as follows. This protein is located at the 30S-50S ribosomal subunit interface and may play a role in the structure and function of the aminoacyl-tRNA binding site. This is Large ribosomal subunit protein bL19 from Chloroflexus aggregans (strain MD-66 / DSM 9485).